We begin with the raw amino-acid sequence, 458 residues long: Cobyrinate a,c-diamide synthase (458 aa).

The region spanning 254–445 (KIGVIRDQVF…IHVHFLSDKS (192 aa)) is the GATase cobBQ-type domain. C335 functions as the Nucleophile in the catalytic mechanism.

The protein belongs to the CobB/CbiA family. Mg(2+) serves as cofactor.

It catalyses the reaction cob(II)yrinate + 2 L-glutamine + 2 ATP + 2 H2O = cob(II)yrinate a,c diamide + 2 L-glutamate + 2 ADP + 2 phosphate + 2 H(+). It participates in cofactor biosynthesis; adenosylcobalamin biosynthesis; cob(II)yrinate a,c-diamide from sirohydrochlorin (anaerobic route): step 10/10. Catalyzes the ATP-dependent amidation of the two carboxylate groups at positions a and c of cobyrinate, using either L-glutamine or ammonia as the nitrogen source. This is Cobyrinate a,c-diamide synthase from Archaeoglobus fulgidus (strain ATCC 49558 / DSM 4304 / JCM 9628 / NBRC 100126 / VC-16).